The chain runs to 632 residues: 1-deoxy-D-xylulose-5-phosphate synthase (632 aa).

Thiamine diphosphate is bound by residues His-73 and 114–116 (SHA). Asp-146 is a binding site for Mg(2+). Thiamine diphosphate is bound by residues 147 to 148 (GA), Asn-176, Tyr-287, and Glu-368. Asn-176 serves as a coordination point for Mg(2+).

This sequence belongs to the transketolase family. DXPS subfamily. As to quaternary structure, homodimer. The cofactor is Mg(2+). Thiamine diphosphate is required as a cofactor.

It catalyses the reaction D-glyceraldehyde 3-phosphate + pyruvate + H(+) = 1-deoxy-D-xylulose 5-phosphate + CO2. Its pathway is metabolic intermediate biosynthesis; 1-deoxy-D-xylulose 5-phosphate biosynthesis; 1-deoxy-D-xylulose 5-phosphate from D-glyceraldehyde 3-phosphate and pyruvate: step 1/1. Functionally, catalyzes the acyloin condensation reaction between C atoms 2 and 3 of pyruvate and glyceraldehyde 3-phosphate to yield 1-deoxy-D-xylulose-5-phosphate (DXP). The chain is 1-deoxy-D-xylulose-5-phosphate synthase from Corynebacterium glutamicum (strain R).